Reading from the N-terminus, the 238-residue chain is Chloride intracellular channel exl-1 (238 aa).

This sequence belongs to the chloride channel CLIC family. Expressed in the intestine, neurons and muscles.

The protein localises to the cytoplasm. The protein resides in the membrane. It is found in the lysosome membrane. It localises to the golgi apparatus membrane. Its function is as follows. Probable chloride channel. The polypeptide is Chloride intracellular channel exl-1 (exl-1) (Caenorhabditis elegans).